The sequence spans 350 residues: Phosphotriesterase-related protein (350 aa).

A divalent metal cation contacts are provided by His-22, His-24, Glu-169, His-201, His-230, and Asp-298.

It belongs to the metallo-dependent hydrolases superfamily. Phosphotriesterase family. Requires a divalent metal cation as cofactor.

This is Phosphotriesterase-related protein from Drosophila pseudoobscura pseudoobscura (Fruit fly).